Consider the following 94-residue polypeptide: Lipolysis-activating peptide 1-beta chain (94 aa).

The signal sequence occupies residues 1 to 19 (MKILAVVLISVIVLNTANG). Positions 20-87 (ENYYPQKYTN…FFNALESQCP (68 aa)) constitute an LCN-type CS-alpha/beta domain. 3 disulfides stabilise this stretch: cysteine 34-cysteine 56, cysteine 42-cysteine 66, and cysteine 46-cysteine 68.

The protein belongs to the long (3 C-C) scorpion toxin superfamily. In terms of assembly, homodimer; disulfide-linked or monomer (edited version) or heterodimer of an alpha chain (AC D9U299 or AC D9U2A4) and this beta chain (non-edited version). As to expression, expressed by the venom gland.

Its subcellular location is the secreted. Functionally, the homodimer inhibits HMG-CoA reductase (HMGCR) (32% of inhibition produced by 0.6 uM), a glycoprotein involved in the control of cholesterol biosynthesis. The inhibitory effects of bumarsin are seen at much lower concentrations (0.6 uM) than that for statins such as atorvastatin (5 mM) and simvastatin (10 uM). In addition to inhibition of HMG-CoA reductase, this protein lowers cholesterol levels by inducing steroid hormone synthesis via StAR, and by increasing reverse cholesterol transport mediated by the induction of ABCA1 and APOA1. In terms of biological role, the heterodimer non-edited LVP1 induces lipolysis in rat adipocytes. Induction of lipolysis by LVP1 appears to be mediated through the beta-2 adrenergic receptor pathway (ADRB2). Its function is as follows. The monomer edited version, similar to alpha-toxins, may modulate voltage-gated sodium channels (Nav) and may block voltage-gated potassium channels (Kv). This Lychas mucronatus (Chinese swimming scorpion) protein is Lipolysis-activating peptide 1-beta chain.